The sequence spans 256 residues: Tetraspanin-32 (256 aa).

4 consecutive transmembrane segments (helical) span residues 15 to 35 (LITN…VVVI), 61 to 81 (AFYV…LSTI), 90 to 110 (LMAA…QVAF), and 203 to 223 (CTSL…WFAI).

Belongs to the tetraspanin (TM4SF) family. Expressed exclusively in hematopoietic tissues. Expression detected in spleen, thymus, bone marrow and peripheral blood leukocytes but not in heart, brain, lung, liver, kidney or testis.

It localises to the membrane. The polypeptide is Tetraspanin-32 (Tspan32) (Mus musculus (Mouse)).